We begin with the raw amino-acid sequence, 287 residues long: MPIVKLVILGSGGAVPKADRMLPAIYLEDWLGHRVLLDAGEGVQYRLLQIGISPSSLTLIAVTHMHEDHILGLPGLVITSKFLGGRLKVLAPKSMHGALSKLGVEVADSYEEERFKIKCVEVCHTVDACGWLIQWDVGYKLDLSKTSGLPKWALTELIKGKPVKIGDRIITPEEVADPAHKRFKYLLYTGDTAPCPEMWKKVGSVDVLIHEATFADDVSPSKAHEEGHSTVADAIEAARALNAQVLILTHVSARYPDKSRHRELASRISPPPYIYIPEDFETLLVKL.

7 residues coordinate Zn(2+): His-64, His-66, Asp-68, His-69, His-124, Asp-191, and His-250. Asp-68 functions as the Proton acceptor in the catalytic mechanism.

The protein belongs to the RNase Z family. As to quaternary structure, homodimer. Zn(2+) is required as a cofactor.

The catalysed reaction is Endonucleolytic cleavage of RNA, removing extra 3' nucleotides from tRNA precursor, generating 3' termini of tRNAs. A 3'-hydroxy group is left at the tRNA terminus and a 5'-phosphoryl group is left at the trailer molecule.. Functionally, zinc phosphodiesterase, which displays some tRNA 3'-processing endonuclease activity. Probably involved in tRNA maturation, by removing a 3'-trailer from precursor tRNA. The polypeptide is Ribonuclease Z (Pyrobaculum aerophilum (strain ATCC 51768 / DSM 7523 / JCM 9630 / CIP 104966 / NBRC 100827 / IM2)).